The chain runs to 401 residues: Tyrosine--tRNA ligase (401 aa).

The 'HIGH' region signature appears at 45–54; it reads PTAPDLHLGH. The 'KMSKS' region motif lies at 230–234; that stretch reads KMSKS. Lys-233 lines the ATP pocket. Residues 339 to 399 enclose the S4 RNA-binding domain; the sequence is IWLAKALVEC…GKRKFAKLKV (61 aa).

It belongs to the class-I aminoacyl-tRNA synthetase family. TyrS type 2 subfamily. In terms of assembly, homodimer.

The protein localises to the cytoplasm. It catalyses the reaction tRNA(Tyr) + L-tyrosine + ATP = L-tyrosyl-tRNA(Tyr) + AMP + diphosphate + H(+). Catalyzes the attachment of tyrosine to tRNA(Tyr) in a two-step reaction: tyrosine is first activated by ATP to form Tyr-AMP and then transferred to the acceptor end of tRNA(Tyr). This chain is Tyrosine--tRNA ligase, found in Campylobacter jejuni (strain RM1221).